The sequence spans 349 residues: MGSAIFEPGPLSLLNLACSNLTERYDGPSPLSASTPGPSPDRPGSATMSSPLSSPTGISYQSLLSGILPAAMFPYGYPPVGYMYPTGFPTLAAIQSGHLAFRQLVPTLPFNTVKSSEGQVKEVVSTQSQKKPLAFSIDSILRPDFGKETNEVKRRHASPHREEPKKKVQYIEQMKKKEEIKEEARTESRLSSSSKDSVPDNDKINPPLPPEASKWPAWVFCTRYSDRPSSGRSPRCRRMKKDKAITPDEKRPRTAFTAEQLSRLKHEFNENRYLTERRRQDLARELGLHENQIKIWFQNNRAKLKKSSGQKNPLALQLMAQGLYNHSTIPTEDDEDDEISSTSLQARIE.

Disordered regions lie at residues 26 to 53 (DGPS…SPLS), 146 to 210 (GKET…PLPP), 228 to 252 (PSSG…EKRP), and 327 to 349 (STIP…ARIE). Basic and acidic residues-rich tracts occupy residues 173-188 (QMKK…RTES) and 242-252 (DKAITPDEKRP). The segment at residues 249–308 (EKRPRTAFTAEQLSRLKHEFNENRYLTERRRQDLARELGLHENQIKIWFQNNRAKLKKSS) is a DNA-binding region (homeobox).

The protein belongs to the engrailed homeobox family.

It is found in the nucleus. The sequence is that of Homeobox protein engrailed from Artemia franciscana (Brine shrimp).